The following is a 109-amino-acid chain: CRISPR-associated endoribonuclease Cas2 (109 aa).

Asp-8 serves as a coordination point for Mg(2+).

The protein belongs to the CRISPR-associated endoribonuclease Cas2 protein family. As to quaternary structure, homodimer, forms a heterotetramer with a Cas1 homodimer. Requires Mg(2+) as cofactor.

Functionally, CRISPR (clustered regularly interspaced short palindromic repeat), is an adaptive immune system that provides protection against mobile genetic elements (viruses, transposable elements and conjugative plasmids). CRISPR clusters contain sequences complementary to antecedent mobile elements and target invading nucleic acids. CRISPR clusters are transcribed and processed into CRISPR RNA (crRNA). Functions as a ssRNA-specific endoribonuclease. Involved in the integration of spacer DNA into the CRISPR cassette. In Streptococcus mutans serotype c (strain ATCC 700610 / UA159), this protein is CRISPR-associated endoribonuclease Cas2.